We begin with the raw amino-acid sequence, 528 residues long: Phosphoenolpyruvate carboxykinase (ATP) (528 aa).

Residues arginine 56, tyrosine 192, and lysine 198 each coordinate substrate. Residues lysine 198, histidine 217, and 233-241 (GLSGTGKTT) each bind ATP. The Mn(2+) site is built by lysine 198 and histidine 217. Aspartate 254 provides a ligand contact to Mn(2+). The ATP site is built by glutamate 282, arginine 319, and threonine 444. Arginine 319 lines the substrate pocket.

Belongs to the phosphoenolpyruvate carboxykinase (ATP) family. Requires Mn(2+) as cofactor.

The protein localises to the cytoplasm. It carries out the reaction oxaloacetate + ATP = phosphoenolpyruvate + ADP + CO2. It participates in carbohydrate biosynthesis; gluconeogenesis. In terms of biological role, involved in the gluconeogenesis. Catalyzes the conversion of oxaloacetate (OAA) to phosphoenolpyruvate (PEP) through direct phosphoryl transfer between the nucleoside triphosphate and OAA. This is Phosphoenolpyruvate carboxykinase (ATP) from Bacillus cereus (strain AH187).